Here is a 550-residue protein sequence, read N- to C-terminus: Glucagon-like peptide 2 receptor (550 aa).

The Extracellular portion of the chain corresponds to 1-173 (MRPQPSPAVP…SFRQNVDHYA (173 aa)). Disulfide bonds link cysteine 83–cysteine 105, cysteine 96–cysteine 137, and cysteine 118–cysteine 159. Asparagine 97, asparagine 113, asparagine 148, and asparagine 162 each carry an N-linked (GlcNAc...) asparagine glycan. A helical transmembrane segment spans residues 174 to 198 (LLYTLQLMYTVGYSVSLISLFLALT). Residues 199–210 (LFLFLRKLHCTR) lie on the Cytoplasmic side of the membrane. Residues 211 to 235 (NYIHMNLFASFILKVLAVLVKDMVS) form a helical membrane-spanning segment. Topologically, residues 236–261 (HNSYSKRPDDESGWMSYLSETSVSCR) are extracellular. The chain crosses the membrane as a helical span at residues 262 to 285 (SVQVLLHYFVGTNHLWLLVEGLYL). Topologically, residues 286-299 (HTLLEPTVFPERRL) are cytoplasmic. The helical transmembrane segment at 300 to 321 (WPKYLVVGWAFPMLFVIPWGFA) threads the bilayer. At 322 to 339 (RAHLENTRCWATNGNLKI) the chain is on the extracellular side. A helical membrane pass occupies residues 340 to 362 (WWIIRGPMLLCVTVNFFIFLKIL). At 363–386 (KLLISKLKAHQMCFRDYKYRLAKS) the chain is on the cytoplasmic side. The helical transmembrane segment at 387–405 (TLLLIPLLGVHEVLFTFFP) threads the bilayer. The Extracellular portion of the chain corresponds to 406–417 (DDQVQGFSKRIR). A helical transmembrane segment spans residues 418-438 (LFIQLTLSSVHGFLVALQYGF). The Cytoplasmic portion of the chain corresponds to 439–550 (ANGEVKAELR…MEEILEESEI (112 aa)).

This sequence belongs to the G-protein coupled receptor 2 family.

Its subcellular location is the cell membrane. This is a receptor for glucagon-like peptide 2. The activity of this receptor is mediated by G proteins which activate adenylyl cyclase. This Rattus norvegicus (Rat) protein is Glucagon-like peptide 2 receptor (Glp2r).